Reading from the N-terminus, the 311-residue chain is Probable cell division protein WhiA (311 aa).

The H-T-H motif DNA-binding region spans T277–E311.

It belongs to the WhiA family.

Its function is as follows. Involved in cell division and chromosome segregation. The sequence is that of Probable cell division protein WhiA from Lactobacillus helveticus (strain DPC 4571).